Consider the following 162-residue polypeptide: ATP synthase subunit b (162 aa).

The chain crosses the membrane as a helical span at residues 6–25; the sequence is TLFTLVTFLVLMLAVGKVAW.

The protein belongs to the ATPase B chain family. In terms of assembly, F-type ATPases have 2 components, F(1) - the catalytic core - and F(0) - the membrane proton channel. F(1) has five subunits: alpha(3), beta(3), gamma(1), delta(1), epsilon(1). F(0) has three main subunits: a(1), b(2) and c(10-14). The alpha and beta chains form an alternating ring which encloses part of the gamma chain. F(1) is attached to F(0) by a central stalk formed by the gamma and epsilon chains, while a peripheral stalk is formed by the delta and b chains.

The protein resides in the cell membrane. Functionally, f(1)F(0) ATP synthase produces ATP from ADP in the presence of a proton or sodium gradient. F-type ATPases consist of two structural domains, F(1) containing the extramembraneous catalytic core and F(0) containing the membrane proton channel, linked together by a central stalk and a peripheral stalk. During catalysis, ATP synthesis in the catalytic domain of F(1) is coupled via a rotary mechanism of the central stalk subunits to proton translocation. In terms of biological role, component of the F(0) channel, it forms part of the peripheral stalk, linking F(1) to F(0). The polypeptide is ATP synthase subunit b (Lacticaseibacillus paracasei (strain ATCC 334 / BCRC 17002 / CCUG 31169 / CIP 107868 / KCTC 3260 / NRRL B-441) (Lactobacillus paracasei)).